A 248-amino-acid chain; its full sequence is Deoxyribose-phosphate aldolase (248 aa).

Catalysis depends on Asp-106, which acts as the Proton donor/acceptor. The Schiff-base intermediate with acetaldehyde role is filled by Lys-168. Lys-197 functions as the Proton donor/acceptor in the catalytic mechanism.

The protein belongs to the DeoC/FbaB aldolase family. DeoC type 1 subfamily.

It is found in the cytoplasm. It carries out the reaction 2-deoxy-D-ribose 5-phosphate = D-glyceraldehyde 3-phosphate + acetaldehyde. The protein operates within carbohydrate degradation; 2-deoxy-D-ribose 1-phosphate degradation; D-glyceraldehyde 3-phosphate and acetaldehyde from 2-deoxy-alpha-D-ribose 1-phosphate: step 2/2. Catalyzes a reversible aldol reaction between acetaldehyde and D-glyceraldehyde 3-phosphate to generate 2-deoxy-D-ribose 5-phosphate. The polypeptide is Deoxyribose-phosphate aldolase (Sinorhizobium medicae (strain WSM419) (Ensifer medicae)).